Consider the following 380-residue polypeptide: MSTSPIQYRLIKKEKHTGARLGEIITPHGTFPTPMFMPVGTQATVKTQSPEELKQMGSGIILANTYHLWLRPGDELIARAGGLHTFMNWDQPILTDSGGFQVYSLADSRNITEEGVTFKNHLNGSKMFLSPEKAISIQNNLGSDIMMSFDECPQFYQPYDYVKKSIERTSRWAERGLKAHSRPHDQGLFGIVQGAGFEDLRRQSAQDLVSMDFPGYSIGGLAVGESHEEMNAVLDFTTPMLPENKPRYLMGVGAPDSLIDGVIRGVDMFDCVLPTRIARNGTCMTSEGRLVVKNAQFEEDFTPLDHDCDCYTCSNYTRAYIRHLLKADETFGIRLTSYHNLYFLVNLMKKVRQAIMDDNLLEFREDFIERYGYNKSSRNF.

Residue aspartate 96 is the Proton acceptor of the active site. Substrate contacts are provided by residues 96–100 (DSGGF), aspartate 150, glutamine 193, and glycine 220. The RNA binding stretch occupies residues 251-257 (GVGAPDS). The active-site Nucleophile is the aspartate 270. Residues 275 to 279 (TRIAR) form an RNA binding; important for wobble base 34 recognition region. Zn(2+) contacts are provided by cysteine 308, cysteine 310, cysteine 313, and histidine 339.

The protein belongs to the queuine tRNA-ribosyltransferase family. In terms of assembly, homodimer. Within each dimer, one monomer is responsible for RNA recognition and catalysis, while the other monomer binds to the replacement base PreQ1. It depends on Zn(2+) as a cofactor.

It catalyses the reaction 7-aminomethyl-7-carbaguanine + guanosine(34) in tRNA = 7-aminomethyl-7-carbaguanosine(34) in tRNA + guanine. It functions in the pathway tRNA modification; tRNA-queuosine biosynthesis. Catalyzes the base-exchange of a guanine (G) residue with the queuine precursor 7-aminomethyl-7-deazaguanine (PreQ1) at position 34 (anticodon wobble position) in tRNAs with GU(N) anticodons (tRNA-Asp, -Asn, -His and -Tyr). Catalysis occurs through a double-displacement mechanism. The nucleophile active site attacks the C1' of nucleotide 34 to detach the guanine base from the RNA, forming a covalent enzyme-RNA intermediate. The proton acceptor active site deprotonates the incoming PreQ1, allowing a nucleophilic attack on the C1' of the ribose to form the product. After dissociation, two additional enzymatic reactions on the tRNA convert PreQ1 to queuine (Q), resulting in the hypermodified nucleoside queuosine (7-(((4,5-cis-dihydroxy-2-cyclopenten-1-yl)amino)methyl)-7-deazaguanosine). In Streptococcus sanguinis (strain SK36), this protein is Queuine tRNA-ribosyltransferase.